The following is a 156-amino-acid chain: Probable histone H2A.6 (156 aa).

2 disordered regions span residues 1 to 26 (MDVGVGGKAAKKAVGRKLGGPKKKPV) and 129 to 156 (KKTAEKADKPAKASKDKAAKSPKKQARS). Residues 9 to 26 (AAKKAVGRKLGGPKKKPV) are compositionally biased toward basic residues. Over residues 130–147 (KTAEKADKPAKASKDKAA) the composition is skewed to basic and acidic residues. The short motif at 149–152 (SPKK) is the SPKK motif element.

It belongs to the histone H2A family. In terms of assembly, the nucleosome is a histone octamer containing two molecules each of H2A, H2B, H3 and H4 assembled in one H3-H4 heterotetramer and two H2A-H2B heterodimers. The octamer wraps approximately 147 bp of DNA.

It localises to the nucleus. Its subcellular location is the chromosome. Core component of nucleosome. Nucleosomes wrap and compact DNA into chromatin, limiting DNA accessibility to the cellular machineries which require DNA as a template. Histones thereby play a central role in transcription regulation, DNA repair, DNA replication and chromosomal stability. DNA accessibility is regulated via a complex set of post-translational modifications of histones, also called histone code, and nucleosome remodeling. This Oryza sativa subsp. indica (Rice) protein is Probable histone H2A.6.